Reading from the N-terminus, the 212-residue chain is MKNSGILCIISAPSGTGKSTLIHTVIQCDCFVYQTKLSISYTTRIKRPGEIHGKDYYFISKKKFKYMIDKNMFFEYAMIFNHYYGTAKTDIETMLNTGIHIVLNIDWKGAQQIRSKISKNIYTIFILPPSKKELARRLYLRGEDTEKVIVARMGQAMDEISHFKEYDYIIINDNFNIALMHLQSIMLSEQLRIAHQKIRYATLINHLLLPDI.

The Guanylate kinase-like domain occupies 5–187 (GILCIISAPS…ALMHLQSIML (183 aa)). 12-19 (APSGTGKS) contributes to the ATP binding site.

Belongs to the guanylate kinase family.

The protein resides in the cytoplasm. It carries out the reaction GMP + ATP = GDP + ADP. Essential for recycling GMP and indirectly, cGMP. This Blochmanniella pennsylvanica (strain BPEN) protein is Guanylate kinase.